The primary structure comprises 371 residues: Leucine-rich repeat-containing protein 2 (371 aa).

LRR repeat units follow at residues 122–143 (HLRE…IQLF), 145–166 (AMRI…IGCL), 168–189 (NLKE…LGDC), 191–214 (NLER…SNLK), 215–235 (QVTF…CVLR), 238–260 (NLQW…DRLE), 261–283 (ELQS…LNLK), 284–305 (KLTL…LCDS), and 308–329 (PLKF…DGNE).

The protein is Leucine-rich repeat-containing protein 2 (LRRC2) of Homo sapiens (Human).